A 329-amino-acid chain; its full sequence is Glucokinase (329 aa).

13–18 contributes to the ATP binding site; that stretch reads GDIGGT.

The protein belongs to the bacterial glucokinase family.

The protein resides in the cytoplasm. It carries out the reaction D-glucose + ATP = D-glucose 6-phosphate + ADP + H(+). This Caulobacter sp. (strain K31) protein is Glucokinase.